The chain runs to 279 residues: MKVISSIHELRDQLRGQNRTAFVPTMGNLHEGHLSLMRLARQHGDPVVASIFVNRLQFGPNEDFDKYPRTLQDDIEKLQKENVYVLFAPTERDMYPEPQEYRVLPPDDLGGILEGEFRPGFFTGVCTVVTKLMACVQPRVAVFGKKDYQQLMIVRRMCQQLALPVDIIAAETVRDEDGLALSSRNRYLSADERSEAPELAKTLQRIRESVLGGEHDLGKLEEMARTHLAGRGWAPDYISIRRRANLIAPDAAQLEAGEPLVVVAAAKLGATRLIDNLEI.

ATP is bound at residue 26 to 33 (MGNLHEGH). Histidine 33 serves as the catalytic Proton donor. Glutamine 57 is a (R)-pantoate binding site. Glutamine 57 lines the beta-alanine pocket. An ATP-binding site is contributed by 144–147 (GKKD). Residue glutamine 150 participates in (R)-pantoate binding. ATP contacts are provided by residues valine 173 and 181–184 (LSSR).

This sequence belongs to the pantothenate synthetase family. Homodimer.

It is found in the cytoplasm. It catalyses the reaction (R)-pantoate + beta-alanine + ATP = (R)-pantothenate + AMP + diphosphate + H(+). It functions in the pathway cofactor biosynthesis; (R)-pantothenate biosynthesis; (R)-pantothenate from (R)-pantoate and beta-alanine: step 1/1. In terms of biological role, catalyzes the condensation of pantoate with beta-alanine in an ATP-dependent reaction via a pantoyl-adenylate intermediate. The protein is Pantothenate synthetase of Burkholderia lata (strain ATCC 17760 / DSM 23089 / LMG 22485 / NCIMB 9086 / R18194 / 383).